The sequence spans 349 residues: N-acetyltaurine hydrolase (349 aa).

Residues H26, H28, E169, H201, H230, and D298 each coordinate a divalent metal cation.

Belongs to the metallo-dependent hydrolases superfamily. Phosphotriesterase family. The cofactor is a divalent metal cation.

It localises to the cytoplasm. It is found in the cytosol. The enzyme catalyses N-acetyltaurine + H2O = taurine + acetate. It carries out the reaction N-propanoyltaurine + H2O = propanoate + taurine. The catalysed reaction is N-acetyl-L-methionine + H2O = L-methionine + acetate. It catalyses the reaction N-acetyl-L-isoleucine + H2O = L-isoleucine + acetate. The enzyme catalyses N-acetyl-L-leucine + H2O = L-leucine + acetate. It carries out the reaction N-acetyl-L-valine + H2O = L-valine + acetate. N-acetyltaurine hydrolase that regulates feeding by catalyzing the hydrolysis of N-acetyltaurine into taurine and acetate. N-acetyltaurine has anorexigenic and anti-obesity effects that are dependent on GFRAL receptor and GDF15. PTER also acts on other N-acetyl amino acids (Met, Ile, Leu, Val) and N-propionyltaurine, but at lower rates. The chain is N-acetyltaurine hydrolase from Pongo abelii (Sumatran orangutan).